Consider the following 265-residue polypeptide: 4-hydroxy-tetrahydrodipicolinate reductase (265 aa).

NAD(+) is bound by residues 7-12 (GASGRM) and Asp33. Position 34 (Arg34) interacts with NADP(+). Residues 96-98 (GTT) and 120-123 (ASNF) contribute to the NAD(+) site. Residue His153 is the Proton donor/acceptor of the active site. Residue His154 coordinates (S)-2,3,4,5-tetrahydrodipicolinate. Lys157 (proton donor) is an active-site residue. 163–164 (GT) contributes to the (S)-2,3,4,5-tetrahydrodipicolinate binding site.

The protein belongs to the DapB family.

The protein resides in the cytoplasm. The enzyme catalyses (S)-2,3,4,5-tetrahydrodipicolinate + NAD(+) + H2O = (2S,4S)-4-hydroxy-2,3,4,5-tetrahydrodipicolinate + NADH + H(+). It catalyses the reaction (S)-2,3,4,5-tetrahydrodipicolinate + NADP(+) + H2O = (2S,4S)-4-hydroxy-2,3,4,5-tetrahydrodipicolinate + NADPH + H(+). It participates in amino-acid biosynthesis; L-lysine biosynthesis via DAP pathway; (S)-tetrahydrodipicolinate from L-aspartate: step 4/4. In terms of biological role, catalyzes the conversion of 4-hydroxy-tetrahydrodipicolinate (HTPA) to tetrahydrodipicolinate. The polypeptide is 4-hydroxy-tetrahydrodipicolinate reductase (Paraburkholderia phymatum (strain DSM 17167 / CIP 108236 / LMG 21445 / STM815) (Burkholderia phymatum)).